Consider the following 206-residue polypeptide: Large ribosomal subunit protein uL4 (206 aa).

The span at 65–76 shows a compositional bias: basic residues; sequence KQKGTGRARHSS. Residues 65 to 94 form a disordered region; it reads KQKGTGRARHSSARAPQFRGGGKAHGPVVR.

This sequence belongs to the universal ribosomal protein uL4 family. In terms of assembly, part of the 50S ribosomal subunit.

Functionally, one of the primary rRNA binding proteins, this protein initially binds near the 5'-end of the 23S rRNA. It is important during the early stages of 50S assembly. It makes multiple contacts with different domains of the 23S rRNA in the assembled 50S subunit and ribosome. Its function is as follows. Forms part of the polypeptide exit tunnel. In Bartonella quintana (strain Toulouse) (Rochalimaea quintana), this protein is Large ribosomal subunit protein uL4.